Here is a 197-residue protein sequence, read N- to C-terminus: Rac-like GTP-binding protein ARAC11 (197 aa).

13-20 (GDGAVGKT) serves as a coordination point for GTP. Positions 35–43 (YVPTVFDNF) match the Effector region motif. GTP is bound by residues 60-64 (DTAGQ) and 118-121 (TKLD). The residue at position 194 (C194) is a Cysteine methyl ester. Residue C194 is the site of S-geranylgeranyl cysteine attachment. Residues 195 to 197 (SIL) constitute a propeptide, removed in mature form.

Belongs to the small GTPase superfamily. Rho family. As to quaternary structure, part of a complex containing ROPGEF1 and PRK2. Interacts with UGT1, ICR1, ICR2, ICR3, ICR4 and ICR5. Interacts with PHIP1 when activated by GTP. As to expression, exclusively expressed in mature pollen and pollen tubes.

The protein localises to the cytoplasm. It is found in the membrane. It catalyses the reaction GTP + H2O = GDP + phosphate + H(+). Functionally, may be involved in cell polarity control during the actin-dependent tip growth of pollen tubes. May regulate callose synthase 1 (CALS1) activity through the interaction with UGT1. Its function is as follows. Inactive GDP-bound Rho GTPases reside in the cytosol, are found in a complex with Rho GDP-dissociation inhibitors (Rho GDIs), and are released from the GDI protein in order to translocate to membranes upon activation. The protein is Rac-like GTP-binding protein ARAC11 of Arabidopsis thaliana (Mouse-ear cress).